A 244-amino-acid polypeptide reads, in one-letter code: Acidic leucine-rich nuclear phosphoprotein 32 family member A (244 aa).

LRR repeat units follow at residues 18 to 41 (DVKELVLDNCRSKEGKIEGLTDEF), 43 to 64 (GLEFLSTINVCLSSIANLPKLN), 65 to 87 (KLKKLELSDNNISGGLEVLAEKC), and 89 to 110 (NLTHLNLSGNRIKDLSTIEPLK). The 39-residue stretch at 123–161 (CEVTNLNDYRENLFKLLPQLTYLDGYDRDDKEAPDSDAE) folds into the LRRCT domain. The segment at 148 to 244 (YDRDDKEAPD…DQDDEGEDDD (97 aa)) is disordered. Acidic residues predominate over residues 157 to 227 (DSDAEGYVEG…EEDEGDEEAE (71 aa)).

This sequence belongs to the ANP32 family. Phosphorylated on serine residues.

It is found in the nucleus. The protein localises to the cytoplasm. The protein resides in the endoplasmic reticulum. Its function is as follows. Implicated in a number of cellular processes, including proliferation, differentiation, caspase-dependent and caspase-independent apoptosis, suppression of transformation (tumor suppressor), inhibition of protein phosphatase 2A, regulation of mRNA trafficking and stability, and inhibition of acetyltransferases as part of the INHAT (inhibitor of histone acetyltransferases) complex. This is Acidic leucine-rich nuclear phosphoprotein 32 family member A (anp32a) from Xenopus laevis (African clawed frog).